The primary structure comprises 157 residues: Small ribosomal subunit protein uS7 (157 aa).

It belongs to the universal ribosomal protein uS7 family. As to quaternary structure, part of the 30S ribosomal subunit. Contacts proteins S9 and S11.

In terms of biological role, one of the primary rRNA binding proteins, it binds directly to 16S rRNA where it nucleates assembly of the head domain of the 30S subunit. Is located at the subunit interface close to the decoding center, probably blocks exit of the E-site tRNA. The polypeptide is Small ribosomal subunit protein uS7 (Francisella philomiragia subsp. philomiragia (strain ATCC 25017 / CCUG 19701 / FSC 153 / O#319-036)).